The primary structure comprises 1189 residues: Zinc finger CCCH domain-containing protein 6 (1189 aa).

Residues 1-12 (MTDSEHAGHDRE) show a composition bias toward basic and acidic residues. Residues 1 to 105 (MTDSEHAGHD…HKKRTGFYRD (105 aa)) form a disordered region. The segment covering 13–28 (DGELEDGEIDDAGFEE) has biased composition (acidic residues). The stretch at 27–73 (EEIQEKEAKENEKQKSEKAYRKSRKKHKKEREKKKSKRRKREKHKHN) forms a coiled coil. Over residues 29–46 (IQEKEAKENEKQKSEKAY) the composition is skewed to basic and acidic residues. Basic residues predominate over residues 47-73 (RKSRKKHKKEREKKKSKRRKREKHKHN). 3 consecutive C3H1-type zinc fingers follow at residues 273–299 (KGKQICKYFLEGRCIKGDQCKFDHDAE), 301–328 (EKRKEICKFYLQGYCTKGENCIYMHNEF), and 329–352 (PCKFYHSGAKCYQGDNCKFSHDDL). The stretch at 353-385 (TKETKKLLDKVLNTDEELINEDERELEELRKRG) forms a coiled coil. Disordered stretches follow at residues 451 to 530 (FYTS…GPQN), 630 to 659 (PPVVQDSPNHGSGSDGSSTRTGHGPLPVPG), 676 to 755 (YQED…GNQV), 947 to 1026 (LEQF…PYAP), and 1051 to 1189 (PRDH…SPFC). The segment covering 461–478 (QFQGSSPHPQHIYSSGSS) has biased composition (low complexity). The span at 505 to 525 (AGPPGLPVPQSPPLPPGPPEI) shows a compositional bias: pro residues. The segment covering 639–659 (HGSGSDGSSTRTGHGPLPVPG) has biased composition (low complexity). The segment covering 718–741 (KTLQKQTETLRNQQQPSTELSTPT) has biased composition (polar residues). Residues 961–973 (GDPRLQKNFDPRL) show a composition bias toward basic and acidic residues. Low complexity-rich tracts occupy residues 1009–1020 (SGAGTSNSGSGA) and 1056–1069 (SSSTSELATASSGE). A Phosphoserine modification is found at serine 1158. The segment covering 1164–1179 (DPGRETDDKSLKEVFK) has biased composition (basic and acidic residues).

The protein is Zinc finger CCCH domain-containing protein 6 (ZC3H6) of Homo sapiens (Human).